Reading from the N-terminus, the 563-residue chain is Germacrene C/D synthase (563 aa).

The segment at 1–22 is disordered; sequence MESCLSVSSAPPPKKNIQEPVR. Mg(2+) is bound by residues D315, D319, and E468. A DDXXD motif motif is present at residues 315-319; that stretch reads DDTYD.

This sequence belongs to the terpene synthase family. It depends on Mg(2+) as a cofactor. In terms of tissue distribution, predominantly expressed in root.

It carries out the reaction (2E,6E)-farnesyl diphosphate = germacrene C + diphosphate. The enzyme catalyses (2E,6E)-farnesyl diphosphate = (-)-germacrene D + diphosphate. Functionally, mediates formation of germacrene C and germacrene D using farnesyl diphosphate as substrate. Can also catalyze formation of trace of germacrene B. The chain is Germacrene C/D synthase (TPS1) from Valeriana officinalis (Valerian).